A 363-amino-acid chain; its full sequence is 3-isopropylmalate dehydrogenase (363 aa).

Residue 78–91 (XXXXXXXXXXXXXX) participates in NAD(+) binding. 4 residues coordinate substrate: Arg-99, Arg-109, Arg-138, and Asp-227. Mg(2+) contacts are provided by Asp-227, Asp-251, and Asp-255. 285 to 297 (GSAPDIEGKNIAN) provides a ligand contact to NAD(+).

Belongs to the isocitrate and isopropylmalate dehydrogenases family. LeuB type 1 subfamily. In terms of assembly, homodimer. It depends on Mg(2+) as a cofactor. Mn(2+) serves as cofactor.

Its subcellular location is the cytoplasm. The catalysed reaction is (2R,3S)-3-isopropylmalate + NAD(+) = 4-methyl-2-oxopentanoate + CO2 + NADH. The protein operates within amino-acid biosynthesis; L-leucine biosynthesis; L-leucine from 3-methyl-2-oxobutanoate: step 3/4. In terms of biological role, catalyzes the oxidation of 3-carboxy-2-hydroxy-4-methylpentanoate (3-isopropylmalate) to 3-carboxy-4-methyl-2-oxopentanoate. The product decarboxylates to 4-methyl-2 oxopentanoate. In Buchnera aphidicola subsp. Uroleucon solidaginis, this protein is 3-isopropylmalate dehydrogenase.